We begin with the raw amino-acid sequence, 335 residues long: Trans-1,2-dihydrobenzene-1,2-diol dehydrogenase (335 aa).

It belongs to the Gfo/Idh/MocA family. Homodimer. In terms of tissue distribution, liver, lens, spleen, kidney and small intestine.

The enzyme catalyses (1R,2R)-1,2-dihydrobenzene-1,2-diol + NADP(+) = catechol + NADPH + H(+). The catalysed reaction is D-xylose + NADP(+) = D-xylono-1,5-lactone + NADPH + H(+). Its activity is regulated as follows. Strongly inhibited by isoascorbic acid, 4-hydroxyacetophenone and chloromercuriphenylsulphonate. Stimulated by various salts. The chain is Trans-1,2-dihydrobenzene-1,2-diol dehydrogenase (DHDH) from Sus scrofa (Pig).